Here is a 236-residue protein sequence, read N- to C-terminus: Homeobox protein notochord (236 aa).

Residues methionine 138–serine 197 constitute a DNA-binding region (homeobox). Residues glycine 209–leucine 236 are disordered. A compositionally biased stretch (acidic residues) spans arginine 223–leucine 236.

In terms of tissue distribution, expressed throughout the embryo during pre-gastrula stages. Localized to the dorsal lip of the blastopore (Spemann organizer) during early gastrulation, after which expression continues in tissues derived from the organizer. Expressed in the notochord during mid-gastrulation. During neurulation, expressed in the notochord, archenteron roof and the prospective floor plate. Also expressed in the region that will become the epiphysis, the pineal body precursor. By the early tailbud stages, expression is limited to posterior notochord and floor plate before becoming restricted to the tip of the tail in the tadpole.

The protein resides in the nucleus. Its function is as follows. Transcriptional repressor. Plays a fundamental role in notochord formation, acting within the mesodermal region. The protein is Homeobox protein notochord (noto) of Xenopus laevis (African clawed frog).